The following is a 634-amino-acid chain: 1-deoxy-D-xylulose-5-phosphate synthase (634 aa).

Residues His77 and Gly118–Ala120 contribute to the thiamine diphosphate site. Asp149 contacts Mg(2+). Thiamine diphosphate-binding positions include Ala150–Ser151, Asn178, Tyr289, and Glu371. Residue Asn178 participates in Mg(2+) binding.

The protein belongs to the transketolase family. DXPS subfamily. In terms of assembly, homodimer. Mg(2+) is required as a cofactor. It depends on thiamine diphosphate as a cofactor.

The enzyme catalyses D-glyceraldehyde 3-phosphate + pyruvate + H(+) = 1-deoxy-D-xylulose 5-phosphate + CO2. Its pathway is metabolic intermediate biosynthesis; 1-deoxy-D-xylulose 5-phosphate biosynthesis; 1-deoxy-D-xylulose 5-phosphate from D-glyceraldehyde 3-phosphate and pyruvate: step 1/1. Functionally, catalyzes the acyloin condensation reaction between C atoms 2 and 3 of pyruvate and glyceraldehyde 3-phosphate to yield 1-deoxy-D-xylulose-5-phosphate (DXP). The protein is 1-deoxy-D-xylulose-5-phosphate synthase of Leptospira interrogans serogroup Icterohaemorrhagiae serovar copenhageni (strain Fiocruz L1-130).